Reading from the N-terminus, the 553-residue chain is Zinc finger matrin-type protein 1 (553 aa).

A disordered region spans residues 16–36; that stretch reads TPSSPAATCSGPMAGGDTSSN. Matrin-type zinc fingers lie at residues 61 to 91, 125 to 155, 223 to 253, and 275 to 305; these read TFCK…KVRL, KFCG…KMRQ, KYCK…NQAR, and YVCP…KESM. Disordered stretches follow at residues 341–402 and 428–553; these read QFRQ…DQRV and HISR…ILGF. The span at 350 to 362 shows a compositional bias: acidic residues; sequence DSCDYEEEEEQEP. The span at 431 to 453 shows a compositional bias: low complexity; it reads RSPTSQDSSDNSSGSSSDESSGS. Basic residues predominate over residues 456–476; the sequence is KDKRRKRKHHRESRLRGSGRI. The segment covering 477–513 has biased composition (basic and acidic residues); that stretch reads RRGDENSEKRKRKGEDADSGKEDNKHDRGKTSGGDKD.

It localises to the nucleus. This is Zinc finger matrin-type protein 1 (zmat1) from Xenopus tropicalis (Western clawed frog).